The following is a 409-amino-acid chain: Lysosome-associated membrane glycoprotein 1 (409 aa).

The signal sequence occupies residues 1–25 (MAAPGGARRRPLLLLLFAGLVHGAS). The interval 26–187 (AVFVVKNGNG…SNFSREETRC (162 aa)) is first lumenal domain. Topologically, residues 26–374 (AVFVVKNGNG…EECQLDENSM (349 aa)) are lumenal. N-linked (GlcNAc...) asparagine glycans are attached at residues Asn34, Asn59, Asn72, Asn80, Asn103, Asn117, Asn126, Asn146, Asn161, and Asn179. Cys38 and Cys76 are disulfide-bonded. Residues Cys151 and Cys187 are joined by a disulfide bond. Residues 180 to 207 (FSREETRCEQDLPTPTTPPQPAPTPAPA) form a disordered region. The hinge stretch occupies residues 188-219 (EQDLPTPTTPPQPAPTPAPASPAVFRYNVSGS). The span at 194-207 (PTTPPQPAPTPAPA) shows a compositional bias: pro residues. N-linked (GlcNAc...) asparagine glycans are attached at residues Asn215, Asn220, Asn241, Asn253, Asn260, Asn285, Asn299, and Asn314. A second lumenal domain region spans residues 220 to 374 (NGTCLLASMG…EECQLDENSM (155 aa)). Cysteines 223 and 261 form a disulfide. A disulfide bridge links Cys330 with Cys367. Residues 375 to 398 (LIPIAVGGALAGLVLIVLLAYLIG) traverse the membrane as a helical segment. Residues 399-409 (RKRSHAGYQTI) are Cytoplasmic-facing.

This sequence belongs to the LAMP family. In terms of assembly, interacts with ABCB9; this interaction strongly stabilizes ABCB9 and protects ABCB9 against lysosomal degradation. Interacts with FURIN. Interacts with TMEM175; inhibiting the proton channel activity of TMEM175. Post-translationally, O- and N-glycosylated; some of the N-glycans attached to LAMP-1 are polylactosaminoglycans.

The protein resides in the lysosome membrane. The protein localises to the endosome membrane. It is found in the late endosome membrane. It localises to the cell membrane. Its subcellular location is the cytolytic granule membrane. Its function is as follows. Lysosomal membrane glycoprotein which plays an important role in lysosome biogenesis, lysosomal pH regulation, autophagy and cholesterol homeostasis. Acts as an important regulator of lysosomal lumen pH regulation by acting as a direct inhibitor of the proton channel TMEM175, facilitating lysosomal acidification for optimal hydrolase activity. Also plays an important role in NK-cells cytotoxicity. Mechanistically, participates in cytotoxic granule movement to the cell surface and perforin trafficking to the lytic granule. In addition, protects NK-cells from degranulation-associated damage induced by their own cytotoxic granule content. Presents carbohydrate ligands to selectins. The chain is Lysosome-associated membrane glycoprotein 1 (LAMP1) from Bos taurus (Bovine).